The following is a 555-amino-acid chain: Spermine oxidase (555 aa).

Residues alanine 35, glutamate 55, arginine 63, 79–80 (TW), and valine 261 each bind FAD. The segment at 271–306 (ARPRGPEIEPRGEGDHNHDTGEGGQGGEEPRGGRWD) is disordered. The segment covering 274 to 291 (RGPEIEPRGEGDHNHDTG) has biased composition (basic and acidic residues). FAD-binding positions include glutamate 519 and 528-529 (TT).

The protein belongs to the flavin monoamine oxidase family. It depends on FAD as a cofactor. Widely expressed. Expressed in human tumor cell lines. Isoform 4 is only found in an embryonal kidney cell line.

Its subcellular location is the cytoplasm. It localises to the nucleus. It catalyses the reaction spermine + O2 + H2O = 3-aminopropanal + spermidine + H2O2. Its pathway is amine and polyamine degradation; spermine degradation. With respect to regulation, inhibited at more than 90% by SL-11144, SL-11150 and SL-11158, at concentrations less than 1 uM. Its function is as follows. Flavoenzyme which catalyzes the oxidation of spermine to spermidine. Can also use N(1)-acetylspermine and spermidine as substrates, with different affinity depending on the isoform (isozyme) and on the experimental conditions. Plays an important role in the regulation of polyamine intracellular concentration and has the potential to act as a determinant of cellular sensitivity to the antitumor polyamine analogs. May contribute to beta-alanine production via aldehyde dehydrogenase conversion of 3-amino-propanal. In Homo sapiens (Human), this protein is Spermine oxidase (SMOX).